A 401-amino-acid chain; its full sequence is Cysteine desulfurase (401 aa).

Residues 72–73 (AT), N151, Q179, and 199–201 (SAH) each bind pyridoxal 5'-phosphate. Position 202 is an N6-(pyridoxal phosphate)lysine (K202). A pyridoxal 5'-phosphate-binding site is contributed by T237. The active-site Cysteine persulfide intermediate is the C324. Position 324 (C324) interacts with [2Fe-2S] cluster.

This sequence belongs to the class-V pyridoxal-phosphate-dependent aminotransferase family. NifS/IscS subfamily. In terms of assembly, homodimer. It depends on pyridoxal 5'-phosphate as a cofactor.

The catalysed reaction is (sulfur carrier)-H + L-cysteine = (sulfur carrier)-SH + L-alanine. Functionally, catalyzes the removal of elemental sulfur atoms from cysteine to produce alanine. Seems to participate in the biosynthesis of the nitrogenase metalloclusters by providing the inorganic sulfur required for the Fe-S core formation. This chain is Cysteine desulfurase, found in Enterobacter agglomerans (Erwinia herbicola).